A 147-amino-acid chain; its full sequence is 3-dehydroquinate dehydratase (147 aa).

Residue tyrosine 25 is the Proton acceptor of the active site. Asparagine 76, histidine 82, and aspartate 89 together coordinate substrate. The active-site Proton donor is histidine 102. Residues 103-104 and arginine 113 each bind substrate; that span reads LS.

The protein belongs to the type-II 3-dehydroquinase family. As to quaternary structure, homododecamer.

The catalysed reaction is 3-dehydroquinate = 3-dehydroshikimate + H2O. It participates in metabolic intermediate biosynthesis; chorismate biosynthesis; chorismate from D-erythrose 4-phosphate and phosphoenolpyruvate: step 3/7. In terms of biological role, catalyzes a trans-dehydration via an enolate intermediate. This is 3-dehydroquinate dehydratase from Nostoc sp. (strain PCC 7120 / SAG 25.82 / UTEX 2576).